The primary structure comprises 243 residues: Probable transcriptional regulatory protein BG0025 (243 aa).

It belongs to the TACO1 family.

Its subcellular location is the cytoplasm. This is Probable transcriptional regulatory protein BG0025 from Borrelia garinii subsp. bavariensis (strain ATCC BAA-2496 / DSM 23469 / PBi) (Borreliella bavariensis).